Consider the following 589-residue polypeptide: Sulfite reductase [NADPH] hemoprotein beta-component (589 aa).

[4Fe-4S] cluster contacts are provided by C443, C449, C488, and C492. Residue C492 participates in siroheme binding.

It belongs to the nitrite and sulfite reductase 4Fe-4S domain family. As to quaternary structure, alpha(8)-beta(8). The alpha component is a flavoprotein, the beta component is a hemoprotein. Siroheme serves as cofactor. [4Fe-4S] cluster is required as a cofactor.

The catalysed reaction is hydrogen sulfide + 3 NADP(+) + 3 H2O = sulfite + 3 NADPH + 4 H(+). It participates in sulfur metabolism; hydrogen sulfide biosynthesis; hydrogen sulfide from sulfite (NADPH route): step 1/1. Functionally, component of the sulfite reductase complex that catalyzes the 6-electron reduction of sulfite to sulfide. This is one of several activities required for the biosynthesis of L-cysteine from sulfate. The chain is Sulfite reductase [NADPH] hemoprotein beta-component from Neisseria meningitidis serogroup C / serotype 2a (strain ATCC 700532 / DSM 15464 / FAM18).